Consider the following 647-residue polypeptide: Leucine-rich repeat and WD repeat-containing protein 1 (647 aa).

LRR repeat units lie at residues 22 to 43 (KIRS…PKLL), 48 to 69 (QLQE…LGLS), 70 to 91 (HLRV…CQFP), and 92 to 113 (KLEE…LKVS). The interval 204–267 (RTQVQKANSP…GSPVAGSDGS (64 aa)) is disordered. Phosphoserine occurs at positions 212, 243, 251, 259, and 264. 7 WD repeats span residues 282 to 335 (HSKN…LHKY), 341 to 379 (EFFS…LLHV), 383 to 422 (FCCG…LWDI), 426 to 472 (NQDY…CWDV), 484 to 526 (EVEF…LWSW), 542 to 582 (VVLA…LYDV), and 598 to 646 (APTQ…IWGR).

It belongs to the LRWD1 family. In terms of assembly, integral component of the ORC complex. Directly interacts with CDT1, GMNN and ORC2. Interacts with ORC2 only when non-ubiquitinated; this interaction prevents LRWD1 ubiquitination and degradation. Some of these interactions are regulated in a cell-cycle dependent manner. Interaction with ORC1 occurs predominantly during G1. Association with phosphorylated ORC1 during mitosis is not efficient. Interaction with CDT1 occurs during G1 phase, as well as during mitosis with phosphorylated CDT1. Interaction with GMNN occurs from G1/S to mitosis. Interaction with ORC2 is observed throughout the cell cycle. The stoichiometry of the ORCA/ORC/CDT1/GMNN complex is 1:1:1:2. Interacts with CUL4A and DDB1; this interaction may lead to ubiquitination. Post-translationally, ubiquitinated; undergoes 'Lys-48'-linked polyubiquitination leading to proteasomal degradation. Ubiquitination occurs within the WD repeats at the end of the G1 phase. Ubiquitination may be catalyzed by the CUL4-DDB1 E3 ubiquitin-protein ligase complex and other E3 ligases. Testis-specific. Drastically down-regulated in testis from patients with Sertoli cell-only syndrome (SCOS).

The protein localises to the nucleus. It is found in the chromosome. It localises to the centromere. Its subcellular location is the telomere. The protein resides in the cytoplasm. The protein localises to the cytoskeleton. It is found in the microtubule organizing center. It localises to the centrosome. Its subcellular location is the kinetochore. Functionally, required for G1/S transition. Recruits and stabilizes the origin recognition complex (ORC) onto chromatin during G1 to establish pre-replication complex (preRC) and to heterochromatic sites in post-replicated cells. Binds a combination of DNA and histone methylation repressive marks on heterochromatin. Binds histone H3 and H4 trimethylation marks H3K9me3, H3K27me3 and H4K20me3 in a cooperative manner with DNA methylation. Required for silencing of major satellite repeats. May be important ORC2, ORC3 and ORC4 stability. The protein is Leucine-rich repeat and WD repeat-containing protein 1 (LRWD1) of Homo sapiens (Human).